The sequence spans 295 residues: Ribose-phosphate pyrophosphokinase (295 aa).

ATP is bound by residues 46–48 (DGE) and 101–102 (RQ). Histidine 132 and aspartate 171 together coordinate Mg(2+). Lysine 194 is a catalytic residue. 2 residues coordinate D-ribose 5-phosphate: arginine 196 and aspartate 220.

Belongs to the ribose-phosphate pyrophosphokinase family. Class III (archaeal) subfamily. Requires Mg(2+) as cofactor.

Its subcellular location is the cytoplasm. The catalysed reaction is D-ribose 5-phosphate + ATP = 5-phospho-alpha-D-ribose 1-diphosphate + AMP + H(+). It participates in metabolic intermediate biosynthesis; 5-phospho-alpha-D-ribose 1-diphosphate biosynthesis; 5-phospho-alpha-D-ribose 1-diphosphate from D-ribose 5-phosphate (route I): step 1/1. In terms of biological role, involved in the biosynthesis of the central metabolite phospho-alpha-D-ribosyl-1-pyrophosphate (PRPP) via the transfer of pyrophosphoryl group from ATP to 1-hydroxyl of ribose-5-phosphate (Rib-5-P). This Methanosarcina mazei (strain ATCC BAA-159 / DSM 3647 / Goe1 / Go1 / JCM 11833 / OCM 88) (Methanosarcina frisia) protein is Ribose-phosphate pyrophosphokinase.